The following is an 817-amino-acid chain: MPRPLAALLSTACILSFFIALFPRAASSRDILPLGSSLVVESYESSTLQSSDGTFSSGFYEVYTHAFTFSVWYSKTEAAAANNKTIVWSANPDRPVHARRSALTLQKDGNMVLTDYDGAAVWRADGNNFTGVQRARLLDTGNLVIEDSGGNTVWQSFDSPTDTFLPTQLITAATRLVPTTQSRSPGNYIFRFSDLSVLSLIYHVPQVSDIYWPDPDQNLYQDGRNQYNSTRLGMLTDSGVLASSDFADGQALVASDVGPGVKRRLTLDPDGNLRLYSMNDSDGSWSVSMVAMTQPCNIHGLCGPNGICHYSPTPTCSCPPGYATRNPGNWTEGCMAIVNTTCDRYDKRSMRFVRLPNTDFWGSDQQHLLSVSLRTCRDICISDCTCKGFQYQEGTGSCYPKAYLFSGRTYPTSDVRTIYLKLPTGVSVSNALIPRSDVFDSVPRRLDCDRMNKSIREPFPDVHKTGGGESKWFYFYGFIAAFFVVEVSFISFAWFFVLKRELRPSELWASEKGYKAMTSNFRRYSYRELVKATRKFKVELGRGESGTVYKGVLEDDRHVAVKKLENVRQGKEVFQAELSVIGRINHMNLVRIWGFCSEGSHRLLVSEYVENGSLANILFSEGGNILLDWEGRFNIALGVAKGLAYLHHECLEWVIHCDVKPENILLDQAFEPKITDFGLVKLLNRGGSTQNVSHVRGTLGYIAPEWVSSLPITAKVDVYSYGVVLLELLTGTRVSELVGGTDEVHSMLRKLVRMLSAKLEGEEQSWIDGYLDSKLNRPVNYVQARTLIKLAVSCLEEDRSKRPTMEHAVQTLLSADD.

A signal peptide spans 1–28; it reads MPRPLAALLSTACILSFFIALFPRAASS. Positions 29–158 constitute a Bulb-type lectin domain; sequence RDILPLGSSL…GGNTVWQSFD (130 aa). At 29-472 the chain is on the extracellular side; that stretch reads RDILPLGSSL…HKTGGGESKW (444 aa). Residues Asn83, Asn128, Asn228, and Asn279 are each glycosylated (N-linked (GlcNAc...) asparagine). Residues 292 to 328 enclose the EGF-like domain; it reads MTQPCNIHGLCGPNGICHYSPTPTCSCPPGYATRNPG. Cystine bridges form between Cys296–Cys308 and Cys302–Cys316. N-linked (GlcNAc...) asparagine glycosylation is found at Asn329 and Asn339. The 83-residue stretch at 342–424 folds into the PAN domain; that stretch reads CDRYDKRSMR…VRTIYLKLPT (83 aa). 2 disulfide bridges follow: Cys376–Cys398 and Cys384–Cys386. Asn452 carries an N-linked (GlcNAc...) asparagine glycan. The chain crosses the membrane as a helical span at residues 473–498; it reads FYFYGFIAAFFVVEVSFISFAWFFVL. Over 499 to 817 the chain is Cytoplasmic; it reads KRELRPSELW…AVQTLLSADD (319 aa). The Protein kinase domain occupies 534-817; it reads RKFKVELGRG…AVQTLLSADD (284 aa). ATP contacts are provided by residues 540–548 and Lys562; that span reads LGRGESGTV. Catalysis depends on Asp658, which acts as the Proton acceptor.

It belongs to the protein kinase superfamily. Ser/Thr protein kinase family. In terms of tissue distribution, expressed predominantly in the shoots and roots of young maize seedlings, and to a lesser extent in the silks.

It is found in the membrane. It carries out the reaction L-seryl-[protein] + ATP = O-phospho-L-seryl-[protein] + ADP + H(+). The catalysed reaction is L-threonyl-[protein] + ATP = O-phospho-L-threonyl-[protein] + ADP + H(+). In terms of biological role, probable receptor. Interaction with a ligand in the extracellular domain triggers the protein kinase activity of the cytoplasmic domain. The chain is Putative receptor protein kinase ZmPK1 (PK1) from Zea mays (Maize).